The following is a 201-amino-acid chain: Putative lipoprotein LppC (201 aa).

The first 23 residues, 1–23 (MTSTLHRTPLATAGLALVVALGG), serve as a signal peptide directing secretion. The N-palmitoyl cysteine moiety is linked to residue Cys24. Cys24 carries the S-diacylglycerol cysteine lipid modification. Prevents bacterial uptake by a human macrophage-like cell line stretches follow at residues 77–96 (GANV…AELA), 97–116 (LVVD…IVTG), and 117–136 (IAPG…GHSV). The interval 122-141 (GSTADGQTPAGGHSVPNSGG) is disordered.

Belongs to the UPF0098 family.

The protein localises to the cell membrane. Its subcellular location is the cell surface. Its function is as follows. Probably involved in bacterial recognition and uptake by its host (human). The protein is Putative lipoprotein LppC of Mycobacterium tuberculosis (strain ATCC 25618 / H37Rv).